A 146-amino-acid polypeptide reads, in one-letter code: Small ribosomal subunit protein eS19 (146 aa).

Belongs to the eukaryotic ribosomal protein eS19 family.

The sequence is that of Small ribosomal subunit protein eS19 (RPS19A) from Oryza sativa subsp. japonica (Rice).